The primary structure comprises 215 residues: Orotate phosphoribosyltransferase (215 aa).

Lys-26 is a 5-phospho-alpha-D-ribose 1-diphosphate binding site. 34 to 35 is an orotate binding site; it reads FF. Residues 72 to 73, Arg-99, Lys-100, Lys-103, His-105, and 124 to 132 contribute to the 5-phospho-alpha-D-ribose 1-diphosphate site; these read YK and DDVITAGTA. Residues Thr-128 and Arg-156 each contribute to the orotate site.

The protein belongs to the purine/pyrimidine phosphoribosyltransferase family. PyrE subfamily. As to quaternary structure, homodimer. Requires Mg(2+) as cofactor.

It catalyses the reaction orotidine 5'-phosphate + diphosphate = orotate + 5-phospho-alpha-D-ribose 1-diphosphate. The protein operates within pyrimidine metabolism; UMP biosynthesis via de novo pathway; UMP from orotate: step 1/2. Catalyzes the transfer of a ribosyl phosphate group from 5-phosphoribose 1-diphosphate to orotate, leading to the formation of orotidine monophosphate (OMP). This is Orotate phosphoribosyltransferase from Yersinia pseudotuberculosis serotype O:1b (strain IP 31758).